The following is a 178-amino-acid chain: Heavy metal-associated isoprenylated plant protein 30 (178 aa).

The HMA domain occupies 45–108; sequence LQTIDLKVRM…AVRRAGKRAE (64 aa). Cys-56 and Cys-59 together coordinate a metal cation. At Cys-175 the chain carries Cysteine methyl ester. Cys-175 carries S-farnesyl cysteine lipidation. The propeptide at 176–178 is removed in mature form; the sequence is SLM.

Belongs to the HIPP family. Interacts with ZHD3/HB21, ZHD11/HB29 and ZHD8/HB30.

Its function is as follows. Heavy-metal-binding protein. The protein is Heavy metal-associated isoprenylated plant protein 30 of Arabidopsis thaliana (Mouse-ear cress).